The following is a 226-amino-acid chain: Transcriptional regulatory protein DpiA (226 aa).

Residues 6–122 (TLLIVEDETP…RLGQTLTRFR (117 aa)) form the Response regulatory domain. Position 57 is a 4-aspartylphosphate (aspartate 57). Positions 180–199 (AETVAQALTISRTTARRYLE) form a DNA-binding region, H-T-H motif.

In terms of processing, phosphorylated and activated by DpiB.

The protein resides in the cytoplasm. Its function is as follows. Member of the two-component regulatory system DpiA/DpiB, which is essential for expression of citrate-specific fermentation genes and genes involved in plasmid inheritance. Could be involved in response to both the presence of citrate and external redox conditions. In Escherichia coli O157:H7, this protein is Transcriptional regulatory protein DpiA (dpiA).